A 301-amino-acid polypeptide reads, in one-letter code: Homoserine kinase (301 aa).

ATP is bound at residue 81–91 (RPSSGLGSSAA).

It belongs to the GHMP kinase family. Homoserine kinase subfamily.

It localises to the cytoplasm. It catalyses the reaction L-homoserine + ATP = O-phospho-L-homoserine + ADP + H(+). It participates in amino-acid biosynthesis; L-threonine biosynthesis; L-threonine from L-aspartate: step 4/5. Functionally, catalyzes the ATP-dependent phosphorylation of L-homoserine to L-homoserine phosphate. This chain is Homoserine kinase, found in Halobacterium salinarum (strain ATCC 29341 / DSM 671 / R1).